Consider the following 119-residue polypeptide: Large ribosomal subunit protein uL22 (119 aa).

It belongs to the universal ribosomal protein uL22 family. In terms of assembly, part of the 50S ribosomal subunit.

In terms of biological role, this protein binds specifically to 23S rRNA; its binding is stimulated by other ribosomal proteins, e.g. L4, L17, and L20. It is important during the early stages of 50S assembly. It makes multiple contacts with different domains of the 23S rRNA in the assembled 50S subunit and ribosome. Functionally, the globular domain of the protein is located near the polypeptide exit tunnel on the outside of the subunit, while an extended beta-hairpin is found that lines the wall of the exit tunnel in the center of the 70S ribosome. The chain is Large ribosomal subunit protein uL22 from Rickettsia conorii (strain ATCC VR-613 / Malish 7).